The sequence spans 364 residues: DNA replication and repair protein RecF (364 aa).

Position 30–37 (30–37 (GNNAQGKT)) interacts with ATP.

It belongs to the RecF family.

The protein localises to the cytoplasm. The RecF protein is involved in DNA metabolism; it is required for DNA replication and normal SOS inducibility. RecF binds preferentially to single-stranded, linear DNA. It also seems to bind ATP. This is DNA replication and repair protein RecF from Clostridium botulinum (strain Okra / Type B1).